The following is a 287-amino-acid chain: Elongation factor Ts (287 aa).

An involved in Mg(2+) ion dislocation from EF-Tu region spans residues 79–82 (TDFV).

Belongs to the EF-Ts family.

The protein resides in the cytoplasm. Its function is as follows. Associates with the EF-Tu.GDP complex and induces the exchange of GDP to GTP. It remains bound to the aminoacyl-tRNA.EF-Tu.GTP complex up to the GTP hydrolysis stage on the ribosome. The chain is Elongation factor Ts from Anaplasma phagocytophilum (strain HZ).